We begin with the raw amino-acid sequence, 410 residues long: Bifunctional enzyme IspD/IspF (410 aa).

Positions 1-257 (MSHDPVVPSA…AGAGSASSRL (257 aa)) are 2-C-methyl-D-erythritol 4-phosphate cytidylyltransferase. Residues 258–410 (RSGIGTDVHA…AVATALVERL (153 aa)) are 2-C-methyl-D-erythritol 2,4-cyclodiphosphate synthase. Positions 264 and 266 each coordinate a divalent metal cation. Residues 264–266 (DVH) and 290–291 (HS) contribute to the 4-CDP-2-C-methyl-D-erythritol 2-phosphate site. His-298 serves as a coordination point for a divalent metal cation. 4-CDP-2-C-methyl-D-erythritol 2-phosphate contacts are provided by residues 312-314 (DIG), 385-388 (TTTD), Phe-392, and Arg-395.

In the N-terminal section; belongs to the IspD/TarI cytidylyltransferase family. IspD subfamily. This sequence in the C-terminal section; belongs to the IspF family. The cofactor is a divalent metal cation.

The catalysed reaction is 2-C-methyl-D-erythritol 4-phosphate + CTP + H(+) = 4-CDP-2-C-methyl-D-erythritol + diphosphate. It catalyses the reaction 4-CDP-2-C-methyl-D-erythritol 2-phosphate = 2-C-methyl-D-erythritol 2,4-cyclic diphosphate + CMP. The protein operates within isoprenoid biosynthesis; isopentenyl diphosphate biosynthesis via DXP pathway; isopentenyl diphosphate from 1-deoxy-D-xylulose 5-phosphate: step 2/6. Its pathway is isoprenoid biosynthesis; isopentenyl diphosphate biosynthesis via DXP pathway; isopentenyl diphosphate from 1-deoxy-D-xylulose 5-phosphate: step 4/6. In terms of biological role, bifunctional enzyme that catalyzes the formation of 4-diphosphocytidyl-2-C-methyl-D-erythritol from CTP and 2-C-methyl-D-erythritol 4-phosphate (MEP) (IspD), and catalyzes the conversion of 4-diphosphocytidyl-2-C-methyl-D-erythritol 2-phosphate (CDP-ME2P) to 2-C-methyl-D-erythritol 2,4-cyclodiphosphate (ME-CPP) with a corresponding release of cytidine 5-monophosphate (CMP) (IspF). In Clavibacter michiganensis subsp. michiganensis (strain NCPPB 382), this protein is Bifunctional enzyme IspD/IspF.